The following is a 111-amino-acid chain: Ig kappa chain V-III region PC 2413 (111 aa).

The interval 1–23 (DIVLTQSPASLAVSLGQRATISC) is framework-1. The cysteines at positions 23 and 92 are disulfide-linked. A complementarity-determining-1 region spans residues 24-38 (RASESVVNYGVSLMH). A framework-2 region spans residues 39-53 (WFQQKPGQPPKLLIY). A complementarity-determining-2 region spans residues 54-60 (GASNRGS). Positions 61–92 (GVPARFSGSGSGTDFSLIIHPMEEDDSAMYFC) are framework-3. Positions 93 to 101 (HQTKEVPWT) are complementarity-determining-3. Residues 102-111 (FGGGTDLEIE) are framework-4.

The protein is Ig kappa chain V-III region PC 2413 of Mus musculus (Mouse).